Here is a 530-residue protein sequence, read N- to C-terminus: Bifunctional purine biosynthesis protein PurH (530 aa).

An MGS-like domain is found at 1–148; it reads MNNARPIRRA…KNHKDVTIVV (148 aa).

The protein belongs to the PurH family.

It catalyses the reaction (6R)-10-formyltetrahydrofolate + 5-amino-1-(5-phospho-beta-D-ribosyl)imidazole-4-carboxamide = 5-formamido-1-(5-phospho-D-ribosyl)imidazole-4-carboxamide + (6S)-5,6,7,8-tetrahydrofolate. The catalysed reaction is IMP + H2O = 5-formamido-1-(5-phospho-D-ribosyl)imidazole-4-carboxamide. The protein operates within purine metabolism; IMP biosynthesis via de novo pathway; 5-formamido-1-(5-phospho-D-ribosyl)imidazole-4-carboxamide from 5-amino-1-(5-phospho-D-ribosyl)imidazole-4-carboxamide (10-formyl THF route): step 1/1. It participates in purine metabolism; IMP biosynthesis via de novo pathway; IMP from 5-formamido-1-(5-phospho-D-ribosyl)imidazole-4-carboxamide: step 1/1. This chain is Bifunctional purine biosynthesis protein PurH, found in Vibrio parahaemolyticus serotype O3:K6 (strain RIMD 2210633).